Consider the following 759-residue polypeptide: TY1 enhancer activator (759 aa).

A disordered region spans residues 1–61 (MTAPLWPNKN…GTGANTLTNG (61 aa)). The residue at position 22 (T22) is a Phosphothreonine. Over residues 30 to 51 (SSTNASSNEENSRSSSAANVRS) the composition is skewed to low complexity. The segment at residues 70–96 (CTNCRNRRKKCDLGFPCGNCSRLELVC) is a DNA-binding region (zn(2)-C6 fungal-type). The interval 229–254 (LTPQGEKKKKPLVKGSLYPEGPVSYK) is disordered. The short motif at 744-752 (DDLIRELFG) is the 9aaTAD element. Residue T755 is modified to Phosphothreonine.

It localises to the nucleus. In terms of biological role, TY1 element enhancer binding protein. Binds to the DNA sequence 5'-TCGGTGGTATTATTCCGA-3'. The sequence is that of TY1 enhancer activator (TEA1) from Saccharomyces cerevisiae (strain ATCC 204508 / S288c) (Baker's yeast).